The sequence spans 156 residues: Small ribosomal subunit protein uS7 (156 aa).

The protein belongs to the universal ribosomal protein uS7 family. As to quaternary structure, part of the 30S ribosomal subunit. Contacts proteins S9 and S11.

One of the primary rRNA binding proteins, it binds directly to 16S rRNA where it nucleates assembly of the head domain of the 30S subunit. Is located at the subunit interface close to the decoding center, probably blocks exit of the E-site tRNA. The sequence is that of Small ribosomal subunit protein uS7 from Dechloromonas aromatica (strain RCB).